The chain runs to 512 residues: 2-isopropylmalate synthase (512 aa).

Residues 5 to 267 (LYIFDTTLRD…DSRVDATQIV (263 aa)) enclose the Pyruvate carboxyltransferase domain. Mn(2+)-binding residues include Asp14, His202, His204, and Asn238. The tract at residues 393 to 512 (KLVSLKVVSE…EEKMNAQAAA (120 aa)) is regulatory domain.

The protein belongs to the alpha-IPM synthase/homocitrate synthase family. LeuA type 1 subfamily. As to quaternary structure, homodimer. Mn(2+) is required as a cofactor.

Its subcellular location is the cytoplasm. The catalysed reaction is 3-methyl-2-oxobutanoate + acetyl-CoA + H2O = (2S)-2-isopropylmalate + CoA + H(+). Its pathway is amino-acid biosynthesis; L-leucine biosynthesis; L-leucine from 3-methyl-2-oxobutanoate: step 1/4. Catalyzes the condensation of the acetyl group of acetyl-CoA with 3-methyl-2-oxobutanoate (2-ketoisovalerate) to form 3-carboxy-3-hydroxy-4-methylpentanoate (2-isopropylmalate). This is 2-isopropylmalate synthase from Chromobacterium violaceum (strain ATCC 12472 / DSM 30191 / JCM 1249 / CCUG 213 / NBRC 12614 / NCIMB 9131 / NCTC 9757 / MK).